Consider the following 178-residue polypeptide: Large ribosomal subunit protein uL6 (178 aa).

It belongs to the universal ribosomal protein uL6 family. As to quaternary structure, part of the 50S ribosomal subunit.

Its function is as follows. This protein binds to the 23S rRNA, and is important in its secondary structure. It is located near the subunit interface in the base of the L7/L12 stalk, and near the tRNA binding site of the peptidyltransferase center. This Lactococcus lactis subsp. cremoris (strain SK11) protein is Large ribosomal subunit protein uL6.